A 119-amino-acid chain; its full sequence is Fluoride-specific ion channel FluC (119 aa).

The next 4 helical transmembrane spans lie at 5 to 25, 30 to 50, 59 to 79, and 92 to 112; these read ILPL…LNLA, LSPA…IGIF, WKLL…GFSL, and SALA…WLGL. Na(+)-binding residues include Gly-69 and Thr-72.

Belongs to the fluoride channel Fluc/FEX (TC 1.A.43) family.

The protein resides in the cell inner membrane. The catalysed reaction is fluoride(in) = fluoride(out). With respect to regulation, na(+) is not transported, but it plays an essential structural role and its presence is essential for fluoride channel function. Functionally, fluoride-specific ion channel. Important for reducing fluoride concentration in the cell, thus reducing its toxicity. The polypeptide is Fluoride-specific ion channel FluC (Neisseria gonorrhoeae (strain NCCP11945)).